Reading from the N-terminus, the 371-residue chain is Bifunctional chorismate mutase/prephenate dehydratase (371 aa).

In terms of domain architecture, Chorismate mutase spans 1–92 (MTLKNALLAF…DSVLTQKKWI (92 aa)). Substrate is bound by residues R11, R28, K39, D48, E52, S84, and Q88. Residues 104–284 (KISFLGSFGS…NITQFIILAQ (181 aa)) form the Prephenate dehydratase domain. Positions 285–371 (KKTYITNKKT…IKCIKILGCF (87 aa)) are regulatory.

It localises to the cytoplasm. The enzyme catalyses chorismate = prephenate. It catalyses the reaction prephenate + H(+) = 3-phenylpyruvate + CO2 + H2O. Its pathway is amino-acid biosynthesis; L-phenylalanine biosynthesis; phenylpyruvate from prephenate: step 1/1. It functions in the pathway metabolic intermediate biosynthesis; prephenate biosynthesis; prephenate from chorismate: step 1/1. In terms of biological role, catalyzes the Claisen rearrangement of chorismate to prephenate and the decarboxylation/dehydration of prephenate to phenylpyruvate. This Buchnera aphidicola subsp. Baizongia pistaciae (strain Bp) protein is Bifunctional chorismate mutase/prephenate dehydratase (pheA).